A 300-amino-acid polypeptide reads, in one-letter code: Acyl-CoA-binding domain-containing protein 6 (300 aa).

Low complexity predominate over residues Met-1–Asp-19. Residues Met-1–Lys-43 are disordered. The ACB domain occupies Leu-60 to Gln-145. An acyl-CoA contacts are provided by residues Tyr-87–Lys-91, Lys-113, and Tyr-132. The tract at residues Glu-142–Pro-162 is disordered. Residues Ser-147–Thr-157 are compositionally biased toward basic and acidic residues. ANK repeat units follow at residues Glu-209 to Ser-238 and Glu-242 to Ile-271. The interval Ser-270–Gly-300 is disordered. The span at Glu-284–Arg-293 shows a compositional bias: polar residues.

In terms of tissue distribution, higly expressed in the central nervous system, developing eyes, otic vesicle, and trunk muscles.

The protein localises to the cytoplasm. It is found in the nucleus. Functionally, binds long-chain acyl-coenzyme A molecules with a strong preference for unsaturated C18:1-CoA. Does not bind fatty acids. Plays a role in protein N-myristoylation. The polypeptide is Acyl-CoA-binding domain-containing protein 6 (acbd6) (Danio rerio (Zebrafish)).